Reading from the N-terminus, the 256-residue chain is Pimeloyl-[acyl-carrier protein] methyl ester esterase (256 aa).

Residues histidine 15–proline 242 enclose the AB hydrolase-1 domain. Residues tryptophan 22, serine 82–leucine 83, and phenylalanine 143–glutamine 147 each bind substrate. The active-site Nucleophile is serine 82. Catalysis depends on residues aspartate 207 and histidine 235. Histidine 235 contacts substrate.

It belongs to the AB hydrolase superfamily. Carboxylesterase BioH family. As to quaternary structure, monomer.

The protein localises to the cytoplasm. The catalysed reaction is 6-carboxyhexanoyl-[ACP] methyl ester + H2O = 6-carboxyhexanoyl-[ACP] + methanol + H(+). Its pathway is cofactor biosynthesis; biotin biosynthesis. The physiological role of BioH is to remove the methyl group introduced by BioC when the pimeloyl moiety is complete. It allows to synthesize pimeloyl-ACP via the fatty acid synthetic pathway through the hydrolysis of the ester bonds of pimeloyl-ACP esters. The chain is Pimeloyl-[acyl-carrier protein] methyl ester esterase from Escherichia coli O6:H1 (strain CFT073 / ATCC 700928 / UPEC).